The chain runs to 329 residues: Peroxidase 56 (329 aa).

Positions 1–31 (MAALKMTISCFLFLQVIYCLLSSFAPTNVQG) are cleaved as a signal peptide. 4 disulfide bridges follow: Cys-41–Cys-119, Cys-74–Cys-79, Cys-125–Cys-325, and Cys-204–Cys-236. His-72 (proton acceptor) is an active-site residue. Ca(2+)-binding residues include Asp-73, Val-76, Gly-78, Glu-80, and Ser-82. Residue Asn-158 is glycosylated (N-linked (GlcNAc...) asparagine). Pro-167 provides a ligand contact to substrate. A glycan (N-linked (GlcNAc...) asparagine) is linked at Asn-172. His-197 contacts heme b. Ca(2+) is bound at residue Thr-198. N-linked (GlcNAc...) asparagine glycosylation occurs at Asn-213. Ca(2+) is bound by residues Asp-248, Ser-251, and Asp-256.

This sequence belongs to the peroxidase family. Classical plant (class III) peroxidase subfamily. The cofactor is heme b. Ca(2+) is required as a cofactor.

The protein localises to the secreted. The enzyme catalyses 2 a phenolic donor + H2O2 = 2 a phenolic radical donor + 2 H2O. Functionally, removal of H(2)O(2), oxidation of toxic reductants, biosynthesis and degradation of lignin, suberization, auxin catabolism, response to environmental stresses such as wounding, pathogen attack and oxidative stress. These functions might be dependent on each isozyme/isoform in each plant tissue. The polypeptide is Peroxidase 56 (PER56) (Arabidopsis thaliana (Mouse-ear cress)).